Here is a 158-residue protein sequence, read N- to C-terminus: NAD(P)H-quinone oxidoreductase subunit J, chloroplastic (158 aa).

It belongs to the complex I 30 kDa subunit family. As to quaternary structure, NDH is composed of at least 16 different subunits, 5 of which are encoded in the nucleus.

Its subcellular location is the plastid. The protein resides in the chloroplast thylakoid membrane. It carries out the reaction a plastoquinone + NADH + (n+1) H(+)(in) = a plastoquinol + NAD(+) + n H(+)(out). It catalyses the reaction a plastoquinone + NADPH + (n+1) H(+)(in) = a plastoquinol + NADP(+) + n H(+)(out). Functionally, NDH shuttles electrons from NAD(P)H:plastoquinone, via FMN and iron-sulfur (Fe-S) centers, to quinones in the photosynthetic chain and possibly in a chloroplast respiratory chain. The immediate electron acceptor for the enzyme in this species is believed to be plastoquinone. Couples the redox reaction to proton translocation, and thus conserves the redox energy in a proton gradient. The polypeptide is NAD(P)H-quinone oxidoreductase subunit J, chloroplastic (Liriodendron tulipifera (Tuliptree)).